The primary structure comprises 355 residues: Olfactory receptor 1I1 (355 aa).

Over 1 to 25 the chain is Extracellular; the sequence is MEPEKQTEISEFFLQGLSEKPEHQT. The helical transmembrane segment at 26–49 threads the bilayer; sequence LLFTMFLSTYLVTIIGNALIILAI. The Cytoplasmic portion of the chain corresponds to 50–57; sequence ITDSHLHT. Residues 58-79 form a helical membrane-spanning segment; that stretch reads PMYFFLFNLSLVDTLLSSTTVP. Topologically, residues 80–100 are extracellular; that stretch reads KMLANIQAQSRAIPFVGCLTQ. The helical transmembrane segment at 101–120 threads the bilayer; the sequence is MYAFHLFGTMDSFLLAVMAI. Topologically, residues 121–139 are cytoplasmic; sequence DRFVAIVHPQRYLVLMCSP. The chain crosses the membrane as a helical span at residues 140-158; that stretch reads VCGLLLGASWMITNLQSLI. The Extracellular segment spans residues 159–195; it reads HTCLMAQLTFCAGSEISHFFCDLMPLLKLSGSDTHTN. The chain crosses the membrane as a helical span at residues 196–219; sequence ELVIFAFGIVVGTSPFSCILLSYI. Over 220-236 the chain is Cytoplasmic; sequence RIFWTVFKIPSTRGKWK. A helical membrane pass occupies residues 237–259; sequence AFSTCGLHLTVVSLSYGTIFAVY. The Extracellular portion of the chain corresponds to 260–272; sequence LQPTSPSSSQKDK. The chain crosses the membrane as a helical span at residues 273 to 292; that stretch reads AAALMCGVFIPMLNPFIYSI. Over 293–355 the chain is Cytoplasmic; sequence RNKDMKAALG…QSLAGNRDME (63 aa).

Belongs to the G-protein coupled receptor 1 family.

The protein resides in the cell membrane. Functionally, odorant receptor. This chain is Olfactory receptor 1I1 (OR1I1), found in Homo sapiens (Human).